The primary structure comprises 396 residues: Cell adhesion molecule 3 (396 aa).

The signal sequence occupies residues 1-22; that stretch reads MGAPSALPLLLLLACSWAPGGA. The 102-residue stretch at 23–124 folds into the Ig-like V-type domain; it reads NLSQDDSQPW…VRTAKSLVTV (102 aa). At 23–328 the chain is on the extracellular side; the sequence is NLSQDDSQPW…PVPSSSSTYH (306 aa). Cystine bridges form between C48–C108, C150–C207, and C252–C297. 2 consecutive Ig-like C2-type domains span residues 128 to 226 and 231 to 313; these read PQKP…QRIE and PTAM…FTLN. A glycan (N-linked (GlcNAc...) asparagine) is linked at N288. Residues 329–349 form a helical membrane-spanning segment; the sequence is AIIGGIVAFIVFLLLILLIFL. Over 350 to 396 the chain is Cytoplasmic; the sequence is GHYLIRHKGTYLTHEAKGSDDAPDADTAIINAEGGQSGGDDKKEYFI. Residues 365–396 are disordered; it reads AKGSDDAPDADTAIINAEGGQSGGDDKKEYFI. S386 carries the post-translational modification Phosphoserine.

It belongs to the nectin family. Homodimer. Can form trans-heterodimers with NECTIN3. Interacts with EPB41L1, DLG3, PALS2 and CASK.

It localises to the cell membrane. It is found in the cell junction. In terms of biological role, involved in cell-cell adhesion. Has both calcium-independent homophilic cell-cell adhesion activity and calcium-independent heterophilic cell-cell adhesion activity with IGSF4, NECTIN1 and NECTIN3. Interaction with EPB41L1 may regulate structure or function of cell-cell junctions. The sequence is that of Cell adhesion molecule 3 (Cadm3) from Rattus norvegicus (Rat).